A 297-amino-acid polypeptide reads, in one-letter code: MVKIGSHVSMNGKKMLLGSSEDAVQYGANTFMIYTGAPQNTRRKPIEELNIEAGTEHMKANGIQDIVVHAPYIINIGNSIKPATFELGVNFLKNEIDRTEALGAKQIVLHPGAHVGEGAEKGIPKIIEGLNEVLDPNSNVQIALETMAGKGSEIGRTFEELAQIIEGVTHNDRLSICMDTCHIHDAGYNIVEDFDGVLEQFDKIIGIDRLKVVHVNDSKNERGAHKDRHENIGFGYIGFEALHNIVHHPQLSDLPKILETPFVGTDKKNKKPPYKHEIEMLKEGNFDPHLKEKIMEA.

Zn(2+) is bound by residues His69, His110, Glu145, Asp179, His182, His214, Asp227, His229, and Glu259.

The protein belongs to the AP endonuclease 2 family. Requires Zn(2+) as cofactor.

It catalyses the reaction Endonucleolytic cleavage to 5'-phosphooligonucleotide end-products.. Its function is as follows. Endonuclease IV plays a role in DNA repair. It cleaves phosphodiester bonds at apurinic or apyrimidinic (AP) sites, generating a 3'-hydroxyl group and a 5'-terminal sugar phosphate. This is Probable endonuclease 4 from Oceanobacillus iheyensis (strain DSM 14371 / CIP 107618 / JCM 11309 / KCTC 3954 / HTE831).